Consider the following 193-residue polypeptide: Copper-binding lipoprotein NosL (193 aa).

A signal peptide spans 1 to 19; sequence MRTRLRFVLVAAALALLSA. C20 carries N-palmitoyl cysteine lipidation. C20 carries the S-diacylglycerol cysteine lipid modification.

It belongs to the NosL family. In terms of assembly, monomer. Apo-NosL can form homodimers.

The protein resides in the cell membrane. Its function is as follows. May act as a metallochaperone involved in nitrous oxide reductase assembly. Specifically binds Cu(+). This Achromobacter cycloclastes protein is Copper-binding lipoprotein NosL.